Here is a 123-residue protein sequence, read N- to C-terminus: Large ribosomal subunit protein uL14 (123 aa).

The protein belongs to the universal ribosomal protein uL14 family. As to quaternary structure, part of the 50S ribosomal subunit. Forms a cluster with proteins L3 and L19. In the 70S ribosome, L14 and L19 interact and together make contacts with the 16S rRNA in bridges B5 and B8.

Functionally, binds to 23S rRNA. Forms part of two intersubunit bridges in the 70S ribosome. This chain is Large ribosomal subunit protein uL14, found in Yersinia pestis bv. Antiqua (strain Antiqua).